The primary structure comprises 127 residues: Large ribosomal subunit protein bL20 (127 aa).

This sequence belongs to the bacterial ribosomal protein bL20 family.

Functionally, binds directly to 23S ribosomal RNA and is necessary for the in vitro assembly process of the 50S ribosomal subunit. It is not involved in the protein synthesizing functions of that subunit. The protein is Large ribosomal subunit protein bL20 of Opitutus terrae (strain DSM 11246 / JCM 15787 / PB90-1).